The following is a 246-amino-acid chain: Bis(5'-nucleosyl)-tetraphosphatase PrpE [asymmetrical] (246 aa).

This sequence belongs to the PrpE family. Ni(2+) is required as a cofactor.

The catalysed reaction is P(1),P(4)-bis(5'-guanosyl) tetraphosphate + H2O = GMP + GTP + 2 H(+). Asymmetrically hydrolyzes Ap4p to yield AMP and ATP. The protein is Bis(5'-nucleosyl)-tetraphosphatase PrpE [asymmetrical] of Bacillus cereus (strain ZK / E33L).